A 288-amino-acid chain; its full sequence is Quinate/shikimate dehydrogenase (288 aa).

Residues Lys-71 and Asp-107 each coordinate substrate. Residues 132 to 135 (AGGA), 155 to 158 (NRRD), Lys-205, 232 to 235 (CVYN), and Gly-255 contribute to the NAD(+) site.

Belongs to the shikimate dehydrogenase family. Homodimer.

The catalysed reaction is L-quinate + NAD(+) = 3-dehydroquinate + NADH + H(+). It catalyses the reaction L-quinate + NADP(+) = 3-dehydroquinate + NADPH + H(+). It carries out the reaction shikimate + NADP(+) = 3-dehydroshikimate + NADPH + H(+). The enzyme catalyses shikimate + NAD(+) = 3-dehydroshikimate + NADH + H(+). Its pathway is metabolic intermediate biosynthesis; chorismate biosynthesis; chorismate from D-erythrose 4-phosphate and phosphoenolpyruvate: step 4/7. The actual biological function of YdiB remains unclear, nor is it known whether 3-dehydroshikimate or quinate represents the natural substrate. Catalyzes the reversible NAD-dependent reduction of both 3-dehydroshikimate (DHSA) and 3-dehydroquinate to yield shikimate (SA) and quinate, respectively. It can use both NAD or NADP for catalysis, however it has higher catalytic efficiency with NAD. The sequence is that of Quinate/shikimate dehydrogenase from Shigella flexneri.